The primary structure comprises 242 residues: HTH-type transcriptional regulator GadW (242 aa).

Residues 139 to 236 (GKVERLISFD…GVTPHQFAQH (98 aa)) enclose the HTH araC/xylS-type domain. 2 DNA-binding regions (H-T-H motif) span residues 156 to 177 (RDIAERMYTSESLIKKKLQDEN) and 203 to 226 (LHTIAEKCGYSSTSYFINTFRQYY).

As to quaternary structure, homodimer.

Functionally, depending on the conditions (growth phase and medium), acts as a positive or negative regulator of gadA and gadBC. Repression occurs directly or via the repression of the expression of gadX. Activation occurs directly by the binding of GadW to the gadA and gadBC promoters. The chain is HTH-type transcriptional regulator GadW (gadW) from Escherichia coli (strain K12).